Here is a 229-residue protein sequence, read N- to C-terminus: Orotate phosphoribosyltransferase (229 aa).

Residues Arg107, Lys108, Lys111, His113, and 133-141 (EDLTTAGGS) each bind 5-phospho-alpha-D-ribose 1-diphosphate. Thr137 is a binding site for orotate.

The protein belongs to the purine/pyrimidine phosphoribosyltransferase family. PyrE subfamily. In terms of assembly, homodimer. Mg(2+) is required as a cofactor.

The enzyme catalyses orotidine 5'-phosphate + diphosphate = orotate + 5-phospho-alpha-D-ribose 1-diphosphate. It participates in pyrimidine metabolism; UMP biosynthesis via de novo pathway; UMP from orotate: step 1/2. Functionally, catalyzes the transfer of a ribosyl phosphate group from 5-phosphoribose 1-diphosphate to orotate, leading to the formation of orotidine monophosphate (OMP). This Rhizobium johnstonii (strain DSM 114642 / LMG 32736 / 3841) (Rhizobium leguminosarum bv. viciae) protein is Orotate phosphoribosyltransferase.